A 444-amino-acid chain; its full sequence is E3 ubiquitin-protein ligase APD2 (444 aa).

The segment covering 1 to 15 has biased composition (low complexity); sequence MSLPDSLPSSSSSPP. Residues 1–41 form a disordered region; it reads MSLPDSLPSSSSSPPVTREETGFHRFEHHGNDSGFDHRDRP. Positions 17–41 are enriched in basic and acidic residues; that stretch reads TREETGFHRFEHHGNDSGFDHRDRP. A run of 2 helical transmembrane segments spans residues 74–94 and 312–332; these read VVVV…GLYG and IAYI…SSLF. The RING-type zinc finger occupies 393-432; that stretch reads CAICYDAPRDCFFLSCGHCVACFQCGTRIAETSGFCPVCR.

As to quaternary structure, interacts with At1g78040, At1g10650, VHA-c4/AVAP4, VHA-c''2/VMA16 and TUFA. In terms of tissue distribution, expressed in the shoot apical meristems (SAM), root tips, pollen and inflorescences.

It localises to the endomembrane system. The enzyme catalyses S-ubiquitinyl-[E2 ubiquitin-conjugating enzyme]-L-cysteine + [acceptor protein]-L-lysine = [E2 ubiquitin-conjugating enzyme]-L-cysteine + N(6)-ubiquitinyl-[acceptor protein]-L-lysine.. It participates in protein modification; protein ubiquitination. Functionally, exhibits E2-dependent E3 ligase activity. Involved in pollen mitosis II (PMII) regulation during male gametogenesis. The chain is E3 ubiquitin-protein ligase APD2 from Arabidopsis thaliana (Mouse-ear cress).